A 607-amino-acid polypeptide reads, in one-letter code: SNW/SKI-interacting protein A (607 aa).

Disordered regions lie at residues 29–77 (ERYG…GGAF), 178–205 (AQPKNVPTHDSESKFIKYKPSQQSAAFN), 217–265 (EMAQ…IPPC), 327–434 (LQLK…DRDR), and 516–607 (KVMK…ERGR). Residues 35–49 (SAQSDAAAAAAKPSG) are compositionally biased toward low complexity. The segment at 190–353 (SKFIKYKPSQ…QKARMERTGA (164 aa)) is SNW. Over residues 240–251 (PPVPVMHSPPRP) the composition is skewed to pro residues. 2 coiled-coil regions span residues 313–349 (AREAVQMRSKVQRELQLKEKERKEQELRALAQKARME) and 391–418 (EREARIERDRIREERRRERERERRLEAR). 5 stretches are compositionally biased toward basic and acidic residues: residues 327-339 (LQLKEKERKEQEL), 379-434 (EQPR…DRDR), 516-527 (KVMKTDRFKPDK), 535-550 (RSGKRDRPVEFDKQEE), and 562-571 (EVKKGKKAVE).

It belongs to the SNW family. As to quaternary structure, interacts with FLO6/SIP4. Interacts with DIS1. As to expression, widely expressed.

The protein resides in the nucleus. Its function is as follows. Acts as a positive regulator of drought and salt tolerance. Acts as a positive regulator of cell viability. The polypeptide is SNW/SKI-interacting protein A (Oryza sativa subsp. japonica (Rice)).